Consider the following 225-residue polypeptide: Ribonuclease 3 (225 aa).

One can recognise an RNase III domain in the interval 7–129 (IPRLCRTLGY…IIGAIYLDSD (123 aa)). A Mg(2+)-binding site is contributed by Glu42. Residue Asp46 is part of the active site. The Mg(2+) site is built by Asp115 and Glu118. Residue Glu118 is part of the active site. Residues 155–225 (DPKTLLQEYL…AAQVLELIKK (71 aa)) form the DRBM domain.

The protein belongs to the ribonuclease III family. As to quaternary structure, homodimer. Requires Mg(2+) as cofactor.

It localises to the cytoplasm. It catalyses the reaction Endonucleolytic cleavage to 5'-phosphomonoester.. Functionally, digests double-stranded RNA. Involved in the processing of primary rRNA transcript to yield the immediate precursors to the large and small rRNAs (23S and 16S). Processes some mRNAs, and tRNAs when they are encoded in the rRNA operon. Processes pre-crRNA and tracrRNA of type II CRISPR loci if present in the organism. The protein is Ribonuclease 3 of Shewanella pealeana (strain ATCC 700345 / ANG-SQ1).